The following is a 125-amino-acid chain: Large ribosomal subunit protein bL17 (125 aa).

This sequence belongs to the bacterial ribosomal protein bL17 family. As to quaternary structure, part of the 50S ribosomal subunit. Contacts protein L32.

This chain is Large ribosomal subunit protein bL17, found in Blochmanniella pennsylvanica (strain BPEN).